The following is a 376-amino-acid chain: uncharacterized protein (376 aa).

Residues 82–372 (KIYDDSAVEK…ATSGILWRAL (291 aa)) form the Peptidase M14 domain. Zn(2+)-binding residues include His-138, Glu-141, and His-283. Glu-344 functions as the Proton donor/acceptor in the catalytic mechanism.

Belongs to the peptidase M14 family. The cofactor is Zn(2+).

This is an uncharacterized protein from Bacillus subtilis (strain 168).